A 1096-amino-acid polypeptide reads, in one-letter code: cAMP/cGMP-dependent 3',5'-cAMP/cGMP phosphodiesterase B (1096 aa).

The interval 216–248 (SSSKMIINDSPRTQQRNGTTEQQKKQQQQQYLQ) is disordered. Residues 225-236 (SPRTQQRNGTTE) show a composition bias toward polar residues. A divalent metal cation contacts are provided by His573, His575, and Asp577. Residues 783-930 (VFSK…DLSH) and 946-1070 (ITQH…EDNI) contribute to the a nucleoside 3',5'-cyclic phosphate site.

It belongs to the metallo-beta-lactamase superfamily. cNMP phosphodiesterase family. The cofactor is Mn(2+). Mg(2+) is required as a cofactor. It depends on Zn(2+) as a cofactor.

It is found in the cytoplasm. Its subcellular location is the cytosol. It catalyses the reaction 3',5'-cyclic AMP + H2O = AMP + H(+). The enzyme catalyses 3',5'-cyclic GMP + H2O = GMP + H(+). Dual specificity cAMP and cGMP phosphodiesterase with marked preference for cyclic AMP, which is activated by cAMP and cGMP. Likely functions as a cAMP-stimulated cAMP-phosphodiesterase which may play a role in regulating the cAMP relay response. In Dictyostelium discoideum (Social amoeba), this protein is cAMP/cGMP-dependent 3',5'-cAMP/cGMP phosphodiesterase B (pdeE).